We begin with the raw amino-acid sequence, 282 residues long: NAD(P)H-hydrate epimerase (282 aa).

The transit peptide at 1–53 (MSGLRTLLGLGLLVAGSRLPRIASRQSVCRAGPIWWGTQHRSSETMASAAVKY) directs the protein to the mitochondrion. The region spanning 59-269 (AQAVDEELFN…ALEKKYQLNL (211 aa)) is the YjeF N-terminal domain. 113 to 117 (NNGGD) serves as a coordination point for (6S)-NADPHX. N114 is a K(+) binding site. K138 carries the post-translational modification N6-succinyllysine. Position 179 (D179) interacts with K(+). (6S)-NADPHX-binding positions include 183 to 189 (GFSFKGD) and D212. Position 215 (S215) interacts with K(+).

The protein belongs to the NnrE/AIBP family. In terms of assembly, homodimer. Interacts with APOA1 and APOA2. K(+) serves as cofactor. Post-translationally, undergoes physiological phosphorylation during sperm capacitation, downstream to PKA activation.

It localises to the mitochondrion. The protein localises to the secreted. The enzyme catalyses (6R)-NADHX = (6S)-NADHX. It carries out the reaction (6R)-NADPHX = (6S)-NADPHX. In terms of biological role, catalyzes the epimerization of the S- and R-forms of NAD(P)HX, a damaged form of NAD(P)H that is a result of enzymatic or heat-dependent hydration. This is a prerequisite for the S-specific NAD(P)H-hydrate dehydratase to allow the repair of both epimers of NAD(P)HX. Accelerates cholesterol efflux from endothelial cells to high-density lipoprotein (HDL) and thereby regulates angiogenesis. This Rattus norvegicus (Rat) protein is NAD(P)H-hydrate epimerase.